A 397-amino-acid chain; its full sequence is Flavohemoprotein A (397 aa).

Residues 2-137 (SLSQQSISII…IAQAFIDAEA (136 aa)) form the Globin domain. His84 is a heme b binding site. Active-site charge relay system residues include Tyr94 and Glu136. Residues 150–397 (WRDTREFIVD…YEIFGPLTNV (248 aa)) are reductase. The FAD-binding FR-type domain maps to 151-266 (RDTREFIVDR…SPPAGDYVVD (116 aa)). FAD is bound by residues Tyr189 and 208 to 211 (RHYS). An NADP(+)-binding site is contributed by 279-284 (GVGITP). FAD is bound at residue 390–393 (IFGP).

Belongs to the globin family. Two-domain flavohemoproteins subfamily. This sequence in the C-terminal section; belongs to the flavoprotein pyridine nucleotide cytochrome reductase family. Requires FAD as cofactor. It depends on heme b as a cofactor.

Its subcellular location is the cytoplasm. It carries out the reaction 2 nitric oxide + NADPH + 2 O2 = 2 nitrate + NADP(+) + H(+). It catalyses the reaction 2 nitric oxide + NADH + 2 O2 = 2 nitrate + NAD(+) + H(+). In terms of biological role, is involved in NO detoxification in an aerobic process, termed nitric oxide dioxygenase (NOD) reaction that utilizes O(2) and NAD(P)H to convert NO to nitrate, which protects the cell from various noxious nitrogen compounds. Therefore, plays a central role in the inducible response to nitrosative stress. Its function is as follows. In the presence of oxygen and NADH, it has NADH oxidase activity, which leads to the generation of superoxide and H(2)O(2). Under anaerobic conditions, it also exhibits nitric oxide reductase and FAD reductase activities. However, all these reactions are much lower than NOD activity. The chain is Flavohemoprotein A (fhbA) from Dictyostelium discoideum (Social amoeba).